The following is a 111-amino-acid chain: Large ribosomal subunit protein uL23 (111 aa).

Belongs to the universal ribosomal protein uL23 family. Part of the 50S ribosomal subunit. Contacts protein L29, and trigger factor when it is bound to the ribosome.

One of the early assembly proteins it binds 23S rRNA. One of the proteins that surrounds the polypeptide exit tunnel on the outside of the ribosome. Forms the main docking site for trigger factor binding to the ribosome. This is Large ribosomal subunit protein uL23 from Nitrosospira multiformis (strain ATCC 25196 / NCIMB 11849 / C 71).